The chain runs to 627 residues: tRNA uridine 5-carboxymethylaminomethyl modification enzyme MnmG (627 aa).

14–19 (GAGHAG) lines the FAD pocket. 275–289 (GPRYCPSIEDKVVKF) serves as a coordination point for NAD(+).

Belongs to the MnmG family. In terms of assembly, homodimer. Heterotetramer of two MnmE and two MnmG subunits. FAD is required as a cofactor.

Its subcellular location is the cytoplasm. In terms of biological role, NAD-binding protein involved in the addition of a carboxymethylaminomethyl (cmnm) group at the wobble position (U34) of certain tRNAs, forming tRNA-cmnm(5)s(2)U34. The sequence is that of tRNA uridine 5-carboxymethylaminomethyl modification enzyme MnmG from Lachnoclostridium phytofermentans (strain ATCC 700394 / DSM 18823 / ISDg) (Clostridium phytofermentans).